Here is a 422-residue protein sequence, read N- to C-terminus: C-type lectin domain family 4 member M (422 aa).

At 1–49 (MSDSKEPRVQPLGLLEEDPTTSGIRLFPRDFQFQQTHGHKSSTGCLGHG) the chain is on the cytoplasmic side. The Endocytosis signal motif lies at 14 to 15 (LL). A helical; Signal-anchor for type II membrane protein transmembrane segment spans residues 50 to 70 (PLVLQLLSFALLAGVLVAILV). Residues 71 to 422 (QVYKVPSSLS…KKPIACFRDE (352 aa)) are Extracellular-facing. N-linked (GlcNAc...) asparagine glycosylation is present at asparagine 92. Repeat copies occupy residues 108–130 (KLQE…PEKS), 131–151 (KQQE…ELPE), 154–176 (QLQE…PEES), 177–199 (RLQE…PEKS), 200–222 (RLQE…PEKS), 223–245 (RLQE…PEKS), 246–268 (KLQE…PDQS), and 269–291 (KQQQ…CCRC). Residues 108–292 (KLQEIYQELT…AFERLCCRCP (185 aa)) form an 8 X approximate tandem repeats region. Intrachain disulfides connect cysteine 288/cysteine 418, cysteine 291/cysteine 302, cysteine 319/cysteine 412, and cysteine 391/cysteine 404. The C-type lectin domain maps to 297-413 (FFQGNCYFMS…CNVDNYWICK (117 aa)). 6 residues coordinate Ca(2+): glutamate 382, asparagine 384, serine 386, glutamate 389, asparagine 400, and aspartate 401. Asparagine 384 carries an N-linked (GlcNAc...) asparagine glycan.

As to quaternary structure, homotetramer.

The protein localises to the membrane. Its function is as follows. Probable pathogen-recognition receptor involved in peripheral immune surveillance in liver. May mediate the endocytosis of pathogens which are subsequently degraded in lysosomal compartments. Probably recognizes in a calcium-dependent manner high mannose N-linked oligosaccharides in a variety of pathogen antigens. Is a receptor for ICAM3, probably by binding to mannose-like carbohydrates. In Symphalangus syndactylus (Siamang), this protein is C-type lectin domain family 4 member M (CLEC4M).